Consider the following 317-residue polypeptide: uncharacterized protein (317 aa).

Low complexity predominate over residues 68 to 78 (DSTNTDISNET). Residues 68 to 87 (DSTNTDISNETPILSNNTPI) form a disordered region.

This is an uncharacterized protein from Methanocaldococcus jannaschii (strain ATCC 43067 / DSM 2661 / JAL-1 / JCM 10045 / NBRC 100440) (Methanococcus jannaschii).